The sequence spans 1265 residues: Methionine synthase (1265 aa).

Residues 19–338 form the Hcy-binding domain; that stretch reads QDEIEAILQE…DHIREIAEAV (320 aa). 3 residues coordinate Zn(2+): cysteine 260, cysteine 323, and cysteine 324. Residues 371–632 form the Pterin-binding domain; that stretch reads FVNIGERCNV…IHKELLQLCE (262 aa). Residues 382-384, aspartate 449, asparagine 470, aspartate 537, asparagine 579, arginine 585, and arginine 591 contribute to the (6S)-5,6,7,8-tetrahydrofolate site; that span reads GSR. Residues 662 to 759 form the B12-binding N-terminal domain; the sequence is QTDEWRNGPL…FMEKEREETK (98 aa). Methylcob(III)alamin is bound by residues glutamate 709, 782 to 786, histidine 785, serine 830, threonine 834, and alanine 886; that span reads GDVHD. The region spanning 772–907 is the B12-binding domain; sequence QGTIVLATVK…DENLKDEYFE (136 aa). One can recognise an AdoMet activation domain in the interval 923–1265; it reads SLKERRYLTL…LGPILGYDTD (343 aa). Residues aspartate 974, arginine 1172, and 1227–1228 contribute to the S-adenosyl-L-methionine site; that span reads YF. Position 1264 is a phosphothreonine (threonine 1264).

The protein belongs to the vitamin-B12 dependent methionine synthase family. As to quaternary structure, monomer. Dimer. Forms a multiprotein complex with MMACHC, MMADHC and MTRR. Methylcob(III)alamin is required as a cofactor. Zn(2+) serves as cofactor.

It is found in the cytoplasm. The enzyme catalyses (6S)-5-methyl-5,6,7,8-tetrahydrofolate + L-homocysteine = (6S)-5,6,7,8-tetrahydrofolate + L-methionine. Its pathway is amino-acid biosynthesis; L-methionine biosynthesis via de novo pathway; L-methionine from L-homocysteine (MetH route): step 1/1. Catalyzes the transfer of a methyl group from methylcob(III)alamin (MeCbl) to homocysteine, yielding enzyme-bound cob(I)alamin and methionine in the cytosol. MeCbl is an active form of cobalamin (vitamin B12) used as a cofactor for methionine biosynthesis. Cob(I)alamin form is regenerated to MeCbl by a transfer of a methyl group from 5-methyltetrahydrofolate. The processing of cobalamin in the cytosol occurs in a multiprotein complex composed of at least MMACHC, MMADHC, MTRR (methionine synthase reductase) and MTR which may contribute to shuttle safely and efficiently cobalamin towards MTR in order to produce methionine. This Bos taurus (Bovine) protein is Methionine synthase (MTR).